A 245-amino-acid chain; its full sequence is Glucan endo-1,3-beta-glucosidase (245 aa).

The first 23 residues, 1–23 (MMKTLVVVLSLSLTILSFGGAHA), serve as a signal peptide directing secretion. 8 cysteine pairs are disulfide-bonded: C32/C244, C80/C90, C95/C102, C150/C233, C155/C216, C163/C179, C183/C192, and C193/C203.

The protein belongs to the thaumatin family. Abundantly expressed in ripening fruit.

The protein localises to the secreted. It catalyses the reaction Hydrolysis of (1-&gt;3)-beta-D-glucosidic linkages in (1-&gt;3)-beta-D-glucans.. The chain is Glucan endo-1,3-beta-glucosidase from Prunus avium (Cherry).